A 436-amino-acid polypeptide reads, in one-letter code: 3-ketoacyl-CoA thiolase (436 aa).

The active-site Acyl-thioester intermediate is C99. Active-site proton acceptor residues include H392 and C422.

Belongs to the thiolase-like superfamily. Thiolase family. In terms of assembly, heterotetramer of two alpha chains (FadJ) and two beta chains (FadI).

It is found in the cytoplasm. The enzyme catalyses an acyl-CoA + acetyl-CoA = a 3-oxoacyl-CoA + CoA. It functions in the pathway lipid metabolism; fatty acid beta-oxidation. Functionally, catalyzes the final step of fatty acid oxidation in which acetyl-CoA is released and the CoA ester of a fatty acid two carbons shorter is formed. This Shewanella woodyi (strain ATCC 51908 / MS32) protein is 3-ketoacyl-CoA thiolase.